Consider the following 77-residue polypeptide: Large ribosomal subunit protein bL28 (77 aa).

The interval 1–20 (MSRVCQVTGKGPVTGNNISH) is disordered.

It belongs to the bacterial ribosomal protein bL28 family.

This Pseudomonas syringae pv. tomato (strain ATCC BAA-871 / DC3000) protein is Large ribosomal subunit protein bL28.